Consider the following 86-residue polypeptide: Candiduxin-2 (86 aa).

The signal sequence occupies residues 1 to 21 (MKTLLLTLVVLTIACLDLGYT). Cystine bridges form between C24/C45, C38/C62, C66/C78, and C79/C84.

Belongs to the three-finger toxin family. Short-chain subfamily. Orphan group IX sub-subfamily. In terms of tissue distribution, expressed by the venom gland.

It is found in the secreted. The chain is Candiduxin-2 from Bungarus candidus (Malayan krait).